The chain runs to 466 residues: Ribulose bisphosphate carboxylase large chain (466 aa).

At lysine 5 the chain carries N6,N6,N6-trimethyllysine. Substrate contacts are provided by asparagine 114 and threonine 164. Catalysis depends on lysine 166, which acts as the Proton acceptor. A substrate-binding site is contributed by lysine 168. Mg(2+) contacts are provided by lysine 192, aspartate 194, and glutamate 195. N6-carboxylysine is present on lysine 192. The active-site Proton acceptor is histidine 285. Positions 286, 318, and 370 each coordinate substrate.

The protein belongs to the RuBisCO large chain family. Type I subfamily. As to quaternary structure, heterohexadecamer of 8 large chains and 8 small chains; disulfide-linked. The disulfide link is formed within the large subunit homodimers. Requires Mg(2+) as cofactor. The disulfide bond which can form in the large chain dimeric partners within the hexadecamer appears to be associated with oxidative stress and protein turnover.

The protein localises to the plastid. It localises to the chloroplast. It catalyses the reaction 2 (2R)-3-phosphoglycerate + 2 H(+) = D-ribulose 1,5-bisphosphate + CO2 + H2O. It carries out the reaction D-ribulose 1,5-bisphosphate + O2 = 2-phosphoglycolate + (2R)-3-phosphoglycerate + 2 H(+). In terms of biological role, ruBisCO catalyzes two reactions: the carboxylation of D-ribulose 1,5-bisphosphate, the primary event in carbon dioxide fixation, as well as the oxidative fragmentation of the pentose substrate in the photorespiration process. Both reactions occur simultaneously and in competition at the same active site. The chain is Ribulose bisphosphate carboxylase large chain from Poliothyrsis sinensis (Chinese pearlbloom tree).